Reading from the N-terminus, the 396-residue chain is 1-deoxy-D-xylulose 5-phosphate reductoisomerase (396 aa).

The NADPH site is built by Thr-13, Gly-14, Ser-15, Ile-16, and Asn-127. 1-deoxy-D-xylulose 5-phosphate is bound at residue Lys-128. Glu-129 provides a ligand contact to NADPH. Asp-153 is a Mn(2+) binding site. 1-deoxy-D-xylulose 5-phosphate-binding residues include Ser-154, Glu-155, Ser-184, and His-207. Glu-155 contacts Mn(2+). An NADPH-binding site is contributed by Gly-213. The 1-deoxy-D-xylulose 5-phosphate site is built by Ser-220, Asn-225, Lys-226, and Glu-229. Residue Glu-229 coordinates Mn(2+).

The protein belongs to the DXR family. The cofactor is Mg(2+). Mn(2+) is required as a cofactor.

It carries out the reaction 2-C-methyl-D-erythritol 4-phosphate + NADP(+) = 1-deoxy-D-xylulose 5-phosphate + NADPH + H(+). It functions in the pathway isoprenoid biosynthesis; isopentenyl diphosphate biosynthesis via DXP pathway; isopentenyl diphosphate from 1-deoxy-D-xylulose 5-phosphate: step 1/6. In terms of biological role, catalyzes the NADPH-dependent rearrangement and reduction of 1-deoxy-D-xylulose-5-phosphate (DXP) to 2-C-methyl-D-erythritol 4-phosphate (MEP). In Pseudomonas fluorescens (strain Pf0-1), this protein is 1-deoxy-D-xylulose 5-phosphate reductoisomerase.